The following is a 266-amino-acid chain: UPF0294 protein YafD (266 aa).

Belongs to the UPF0294 family.

Its subcellular location is the cytoplasm. The polypeptide is UPF0294 protein YafD (Salmonella paratyphi C (strain RKS4594)).